The chain runs to 498 residues: ATP synthase subunit alpha 1 (498 aa).

This sequence belongs to the ATPase alpha/beta chains family. As to quaternary structure, F-type ATPases have 2 components, CF(1) - the catalytic core - and CF(0) - the membrane proton channel. CF(1) has five subunits: alpha(3), beta(3), gamma(1), delta(1), epsilon(1). CF(0) has three main subunits: a(1), b(2) and c(9-12). The alpha and beta chains form an alternating ring which encloses part of the gamma chain. CF(1) is attached to CF(0) by a central stalk formed by the gamma and epsilon chains, while a peripheral stalk is formed by the delta and b chains.

It is found in the cell membrane. The catalysed reaction is ATP + H2O + 4 H(+)(in) = ADP + phosphate + 5 H(+)(out). Its function is as follows. Produces ATP from ADP in the presence of a proton gradient across the membrane. The alpha chain is a regulatory subunit. This is ATP synthase subunit alpha 1 from Listeria monocytogenes serovar 1/2a (strain ATCC BAA-679 / EGD-e).